The chain runs to 354 residues: 3-dehydroquinate synthase (354 aa).

Residues 66 to 71 (SGETSK), 100 to 104 (GATGD), 124 to 125 (TT), Lys-136, Lys-145, and 163 to 166 (FLET) contribute to the NAD(+) site. Zn(2+) contacts are provided by Glu-178, His-242, and His-256.

Belongs to the sugar phosphate cyclases superfamily. Dehydroquinate synthase family. NAD(+) serves as cofactor. The cofactor is Co(2+). It depends on Zn(2+) as a cofactor.

It is found in the cytoplasm. The enzyme catalyses 7-phospho-2-dehydro-3-deoxy-D-arabino-heptonate = 3-dehydroquinate + phosphate. It functions in the pathway metabolic intermediate biosynthesis; chorismate biosynthesis; chorismate from D-erythrose 4-phosphate and phosphoenolpyruvate: step 2/7. Its function is as follows. Catalyzes the conversion of 3-deoxy-D-arabino-heptulosonate 7-phosphate (DAHP) to dehydroquinate (DHQ). The protein is 3-dehydroquinate synthase of Staphylococcus epidermidis (strain ATCC 35984 / DSM 28319 / BCRC 17069 / CCUG 31568 / BM 3577 / RP62A).